A 141-amino-acid polypeptide reads, in one-letter code: Large-conductance mechanosensitive channel (141 aa).

3 helical membrane-spanning segments follow: residues 14–34 (VMDL…VKSL), 38–58 (IIMP…YFLG), and 81–101 (GSFI…FLMV).

Belongs to the MscL family. As to quaternary structure, homopentamer.

It localises to the cell inner membrane. Its function is as follows. Channel that opens in response to stretch forces in the membrane lipid bilayer. May participate in the regulation of osmotic pressure changes within the cell. This chain is Large-conductance mechanosensitive channel, found in Rhizobium rhizogenes (strain K84 / ATCC BAA-868) (Agrobacterium radiobacter).